The following is a 127-amino-acid chain: Gonadotropin subunit beta-1 (127 aa).

The N-terminal stretch at 1 to 22 is a signal peptide; that stretch reads MHLAVTALCLTLAPVLARASTS. 6 disulfide bridges follow: Cys23–Cys71, Cys37–Cys86, Cys40–Cys124, Cys48–Cys102, Cys52–Cys104, and Cys107–Cys114. 2 N-linked (GlcNAc...) asparagine glycosylation sites follow: Asn27 and Asn44.

It belongs to the glycoprotein hormones subunit beta family. In terms of assembly, heterodimer of an alpha and a beta chain.

The protein resides in the secreted. In terms of biological role, involved in gametogenesis and steroidogenesis. In Anguilla japonica (Japanese eel), this protein is Gonadotropin subunit beta-1 (cgba).